The primary structure comprises 312 residues: Olfactory receptor 1D5 (312 aa).

Residues 1-25 (MDGDNQSENSQFLLLGISESPEQQR) lie on the Extracellular side of the membrane. Asparagine 5 carries an N-linked (GlcNAc...) asparagine glycan. The chain crosses the membrane as a helical span at residues 26–49 (ILFWMFLSMYLVTVLGNVLIILAI). Topologically, residues 50–57 (SSDSHLHT) are cytoplasmic. The chain crosses the membrane as a helical span at residues 58–79 (PMYFFLANLSFTDLFFVTNTIP). Over 80–100 (KMLVNFQSQNKAISYAGCLTQ) the chain is Extracellular. A disulfide bridge connects residues cysteine 97 and cysteine 189. A helical membrane pass occupies residues 101-120 (LYFLVSLVTLDNLILAVMAY). Residues 121–140 (DRYVATCCPLHYVTAMSPGL) are Cytoplasmic-facing. A helical membrane pass occupies residues 141 to 158 (CVLLLSLCWGLSVLYGLL). The Extracellular segment spans residues 159 to 196 (LTFLLTRVTFCGPREIHYLFCDMYILLWLACSNTHIIH). The helical transmembrane segment at 197–220 (TALIATGCFIFLTPLGFMTTSYVR) threads the bilayer. Residues 221 to 237 (IVRTILQMPSASKKYKT) lie on the Cytoplasmic side of the membrane. A helical transmembrane segment spans residues 238 to 260 (FSTCASHLGVVSLFYGTLAMVYL). Residues 261-271 (QPLHTYSMKDS) lie on the Extracellular side of the membrane. The helical transmembrane segment at 272-291 (VATVMYAVLTPMMNPFIYRL) threads the bilayer. At 292–312 (RNKDMHGAPGRVLWRPFQRPK) the chain is on the cytoplasmic side.

It belongs to the G-protein coupled receptor 1 family.

The protein localises to the cell membrane. Functionally, odorant receptor. This Homo sapiens (Human) protein is Olfactory receptor 1D5 (OR1D5).